The primary structure comprises 100 residues: UPF0213 protein YhbQ (100 aa).

Residues 2-77 (TPWFLYLIRT…KQLTKRQKER (76 aa)) form the GIY-YIG domain.

The protein belongs to the UPF0213 family.

This Escherichia coli O17:K52:H18 (strain UMN026 / ExPEC) protein is UPF0213 protein YhbQ.